The chain runs to 555 residues: Cyclin-T1.2 (555 aa).

Disordered regions lie at residues 315–429 (SYKG…NSSK) and 505–555 (PADS…GELV). Residues 321-335 (KPLSNSSDSPSTRPS) are compositionally biased toward low complexity. Residues 341–359 (KNQKVVEQELMEQRMKEAA) are compositionally biased toward basic and acidic residues. Low complexity predominate over residues 382 to 398 (TSSSASNNSNHQNRSSS). Positions 521–543 (PDEPSPPVSQILLPPPPPPPILP) are enriched in pro residues.

It belongs to the cyclin family. Cyclin C subfamily.

Functionally, regulatory subunit of the cyclin-dependent kinase pair (CDK9/cyclin T) complex, also called positive transcription elongation factor B (P-TEFb), which is proposed to facilitate the transition from abortive to production elongation by phosphorylating the CTD (carboxy-terminal domain) of the large subunit of RNA polymerase II (RNAP II). The chain is Cyclin-T1.2 (cit-1.2) from Caenorhabditis elegans.